The primary structure comprises 138 residues: uncharacterized protein (138 aa).

A DNA-binding region (H-T-H motif) is located at residues 17–38 (LCRNDVAHEAGTNNVQIMRIEK).

This is an uncharacterized protein from Herpetosiphon aurantiacus (Herpetosiphon giganteus).